A 407-amino-acid polypeptide reads, in one-letter code: Probable NADPH dehydrogenase (407 aa).

Residues Thr-49 and Gln-124 each coordinate FMN. Position 201-204 (201-204 (HGAH)) interacts with substrate. The Proton donor role is filled by Tyr-206. Positions 254 and 357 each coordinate FMN.

It belongs to the NADH:flavin oxidoreductase/NADH oxidase family. FMN serves as cofactor.

The catalysed reaction is A + NADPH + H(+) = AH2 + NADP(+). Its function is as follows. Oxidoreductase that binds mammalian estrogens with high affinity. This is Probable NADPH dehydrogenase from Candida albicans (Yeast).